The chain runs to 339 residues: Protein FAM131B (339 aa).

The tract at residues 1 to 22 (MDSTSSLHGSSLHRPSTEQTRT) is disordered. A phosphoserine mark is found at Ser-47, Ser-114, and Ser-117. The tract at residues 222 to 339 (GPAFGDSQPS…PLLTQPSTPA (118 aa)) is disordered. Polar residues-rich tracts occupy residues 239–250 (QPASGYSAQEPS) and 324–339 (PTTSFLPLLTQPSTPA). The residue at position 325 (Thr-325) is a Phosphothreonine. At Ser-327 the chain carries Phosphoserine.

This sequence belongs to the FAM131 family.

This chain is Protein FAM131B (FAM131B), found in Bos taurus (Bovine).